The following is a 304-amino-acid chain: Pyridoxal 5'-phosphate synthase subunit pyroA (304 aa).

Asp-28 lines the D-ribose 5-phosphate pocket. The active-site Schiff-base intermediate with D-ribose 5-phosphate is Lys-85. Gly-157 lines the D-ribose 5-phosphate pocket. Arg-169 contributes to the D-glyceraldehyde 3-phosphate binding site. Residues Gly-224 and Gly-245–Ser-246 contribute to the D-ribose 5-phosphate site.

The protein belongs to the PdxS/SNZ family.

The catalysed reaction is aldehydo-D-ribose 5-phosphate + D-glyceraldehyde 3-phosphate + L-glutamine = pyridoxal 5'-phosphate + L-glutamate + phosphate + 3 H2O + H(+). Its pathway is cofactor biosynthesis; pyridoxal 5'-phosphate biosynthesis. Functionally, catalyzes the formation of pyridoxal 5'-phosphate from ribose 5-phosphate (RBP), glyceraldehyde 3-phosphate (G3P) and ammonia. The ammonia is provided by PDX2. Can also use ribulose 5-phosphate and dihydroxyacetone phosphate as substrates, resulting from enzyme-catalyzed isomerization of RBP and G3P, respectively. Also plays an indirect role in resistance to singlet oxygen-generating photosensitizers. This is Pyridoxal 5'-phosphate synthase subunit pyroA (pyroA) from Emericella nidulans (strain FGSC A4 / ATCC 38163 / CBS 112.46 / NRRL 194 / M139) (Aspergillus nidulans).